The primary structure comprises 168 residues: Shikimate kinase (168 aa).

Glycine 11–threonine 16 is a binding site for ATP. Threonine 15 contacts Mg(2+). Aspartate 33, arginine 57, and glycine 78 together coordinate substrate. Arginine 118 lines the ATP pocket. Arginine 136 provides a ligand contact to substrate. Arginine 153 contacts ATP.

This sequence belongs to the shikimate kinase family. As to quaternary structure, monomer. Requires Mg(2+) as cofactor.

It is found in the cytoplasm. It carries out the reaction shikimate + ATP = 3-phosphoshikimate + ADP + H(+). The protein operates within metabolic intermediate biosynthesis; chorismate biosynthesis; chorismate from D-erythrose 4-phosphate and phosphoenolpyruvate: step 5/7. Its function is as follows. Catalyzes the specific phosphorylation of the 3-hydroxyl group of shikimic acid using ATP as a cosubstrate. The chain is Shikimate kinase from Enterococcus faecalis (strain ATCC 700802 / V583).